We begin with the raw amino-acid sequence, 1099 residues long: Zinc finger protein basonuclin-2 (1099 aa).

The segment at 45–66 (EEAEVDVRERETQRDREPKRAR) is disordered. Positions 49–66 (VDVRERETQRDREPKRAR) are enriched in basic and acidic residues. A Glycyl lysine isopeptide (Lys-Gly) (interchain with G-Cter in SUMO2) cross-link involves residue K277. A disordered region spans residues 357-385 (LSTQNEYNESSESEVSPTPYKNDQTPNRN). Low complexity predominate over residues 361 to 372 (NEYNESSESEVS). Residues 375 to 385 (PYKNDQTPNRN) are compositionally biased toward polar residues. Glycyl lysine isopeptide (Lys-Gly) (interchain with G-Cter in SUMO2) cross-links involve residues K396, K416, and K421. Residues 397–423 (TEPACVSPIQNSAPVSDLTKTEHPKSS) form a disordered region. The C2H2-type 1 zinc finger occupies 441 to 464 (VFCNACGKTFYDKGTLKIHYNAVH). A Phosphoserine modification is found at S561. Disordered stretches follow at residues 622–641 (EPSADLAPKKKPRKSSMPVK) and 648–742 (DTAD…EGDE). K641 is covalently cross-linked (Glycyl lysine isopeptide (Lys-Gly) (interchain with G-Cter in SUMO2)). Over residues 648-661 (DTADEFDDEDDDPN) the composition is skewed to acidic residues. Composition is skewed to basic and acidic residues over residues 670–680 (MSHDNHCHSQE) and 719–742 (ERDYENESESSEPKLGEESMEGDE). The C2H2-type 2 zinc finger occupies 833–856 (KICYVCKKSFKSSYSVKLHYRNVH). Residues K894 and K919 each participate in a glycyl lysine isopeptide (Lys-Gly) (interchain with G-Cter in SUMO2) cross-link. Disordered regions lie at residues 929 to 948 (LDVREDASSPAGTEDSHLNG) and 968 to 1008 (LQSS…KAEA). Positions 982–995 (AGSDEGILLDDIDG) are enriched in acidic residues. 2 consecutive C2H2-type zinc fingers follow at residues 1035 to 1058 (IMCNICHKMYSNKGTLRVHYKTVH) and 1063 to 1090 (HKCKVPGCNMMFSSVRSRNRHSQNPNLH). The interval 1079 to 1099 (SRNRHSQNPNLHKNIPFTSVD) is disordered.

In terms of tissue distribution, highly expressed in testis, uterus and small intestine, and weakly expressed in colon and prostate. Also expressed in skin, primary keratinocytes, immortalized keratinocytes, and HeLa and HEK293 cells. Not detected in blood, thymus, spleen or Hep-G2 cells.

It localises to the nucleus. Functionally, probable transcription factor specific for skin keratinocytes. May play a role in the differentiation of spermatozoa and oocytes. May also play an important role in early urinary-tract development. The sequence is that of Zinc finger protein basonuclin-2 from Homo sapiens (Human).